Consider the following 1133-residue polypeptide: Probable cation-transporting ATPase 9 (1133 aa).

Residues 1-6 (MRVSSI) lie on the Cytoplasmic side of the membrane. Residues 7 to 28 (EAEMENPIDVDKTDVEGELKIK) traverse the membrane as a helical segment. Over 29 to 34 (QVTLLR) the chain is Extracellular. The chain crosses the membrane as a helical span at residues 35–53 (ENIVKKIVFFLVAIFCSDR). Over 54-167 (PSVLKKVFYE…IEINVPSFLT (114 aa)) the chain is Cytoplasmic. Residues 168–190 (LMWREFKKPINFLLYFGIIVWGI) traverse the membrane as a helical segment. The Extracellular portion of the chain corresponds to 191–193 (EQM). The helical transmembrane segment at 194–212 (YVSTAITVVFTTTINSLIC) threads the bilayer. The Cytoplasmic segment spans residues 213–363 (IYIRGVMQKL…PFNKKFQQQA (151 aa)). Residues 364 to 383 (VKLTILMATLLLIGFLSTLS) traverse the membrane as a helical segment. Residues 384-396 (RLLDIELPPLFIA) lie on the Extracellular side of the membrane. A helical membrane pass occupies residues 397 to 418 (FRFLDILIYSAPPGMPMLIAIT). Topologically, residues 419-887 (NFVGLKRLKN…NSVEIFKGYL (469 aa)) are cytoplasmic. The 4-aspartylphosphate intermediate role is filled by Asp451. Residues Asp827 and Asp831 each contribute to the Mg(2+) site. The helical transmembrane segment at 888–906 (QVALLRYLGFLTLAYFYSS) threads the bilayer. Residues 907-915 (YSSGQMDWQ) are Extracellular-facing. A helical membrane pass occupies residues 916-931 (ALASGYFLVYLILGCN). The Cytoplasmic segment spans residues 932–948 (TPLKKLEKSVFDDNLFS). The chain crosses the membrane as a helical span at residues 949-972 (IYNVTSVLFGFTLHILSIVGCVES). The Extracellular segment spans residues 973 to 994 (LHASPIYKEVNSLDAENNFQFE). Residues 995-1018 (TQHNTVLNFNILINFFYVIISNHI) form a helical membrane-spanning segment. Residues 1019–1030 (GKPMKDRYYKNT) are Cytoplasmic-facing. The helical transmembrane segment at 1031–1050 (IAIYYDLGLIYTCKCMILQV) threads the bilayer. Over 1051 to 1101 (LLILEHTHHGLIFLILLLDQEFSSSLTVQVYFSLPMNLFLPEEFSLNFTQE) the chain is Extracellular. A helical membrane pass occupies residues 1102–1124 (VKKEKELLICNSSSTILEVDYNL). Topologically, residues 1125–1133 (RLNYFQQNF) are cytoplasmic.

This sequence belongs to the cation transport ATPase (P-type) (TC 3.A.3) family. Type V subfamily.

It localises to the membrane. The catalysed reaction is ATP + H2O = ADP + phosphate + H(+). In Tetrahymena thermophila, this protein is Probable cation-transporting ATPase 9 (TPA9).